A 155-amino-acid polypeptide reads, in one-letter code: 6,7-dimethyl-8-ribityllumazine synthase (155 aa).

5-amino-6-(D-ribitylamino)uracil is bound by residues Phe24, 58 to 60, and 82 to 84; these read AFE and VII. A (2S)-2-hydroxy-3-oxobutyl phosphate-binding site is contributed by 87-88; it reads ST. The Proton donor role is filled by His90. Phe115 is a 5-amino-6-(D-ribitylamino)uracil binding site. A (2S)-2-hydroxy-3-oxobutyl phosphate-binding site is contributed by Arg129.

This sequence belongs to the DMRL synthase family.

The enzyme catalyses (2S)-2-hydroxy-3-oxobutyl phosphate + 5-amino-6-(D-ribitylamino)uracil = 6,7-dimethyl-8-(1-D-ribityl)lumazine + phosphate + 2 H2O + H(+). Its pathway is cofactor biosynthesis; riboflavin biosynthesis; riboflavin from 2-hydroxy-3-oxobutyl phosphate and 5-amino-6-(D-ribitylamino)uracil: step 1/2. In terms of biological role, catalyzes the formation of 6,7-dimethyl-8-ribityllumazine by condensation of 5-amino-6-(D-ribitylamino)uracil with 3,4-dihydroxy-2-butanone 4-phosphate. This is the penultimate step in the biosynthesis of riboflavin. The polypeptide is 6,7-dimethyl-8-ribityllumazine synthase (Chlorobaculum tepidum (strain ATCC 49652 / DSM 12025 / NBRC 103806 / TLS) (Chlorobium tepidum)).